The chain runs to 459 residues: Polycomb protein mes-6 (459 aa).

WD repeat units lie at residues 146–186 (SVGW…CLIV), 192–231 (CHAGTILSVDWSTDGDFILSCGFDHQLMEWDLSVKQVKEH), 305–346 (MHSD…GEVE), 370–409 (SGSAWFIKFAVDPRRRWLVCGGAGGSVMFFDLRNNEETNP), and 415–454 (VGSRTVRQASFSTCGRFLVLVTDEGFVCRFDRVSASVDAK).

It belongs to the WD repeat ESC family. Interacts directly with the N-terminal domain of mes-2. Forms a heterotrimeric complex with mes-2 and mes-3. Does not interact with mes-4. As to expression, in adults, it is predominantly expressed in the germline, and weakly expressed in intestinal cells.

The protein localises to the nucleus. Functionally, polycomb group (PcG) protein. PcG proteins act by forming multiprotein complexes, which are required to maintain the transcriptionally repressive state of homeotic genes throughout development. In association with the nfya-1-NF-Y complex, may play a role in repressing the expression of the homeobox protein egl-5 in tissues such as the head. PcG proteins are not required to initiate repression, but to maintain it during later stages of development. The mes-2/mes-3/mes-6 complex may participate in the global inactivation of the X chromosomes in germline cells. The complex may act via methylation of histone H3 'Lys-27', rendering chromatin heritably changed in its expressibility. This complex is required to exclude mes-4 from the inactivated X-chromosomes in germline cells. Required for small-RNA-induced H3K27 trimethylation. This Caenorhabditis elegans protein is Polycomb protein mes-6.